Reading from the N-terminus, the 244-residue chain is Lipid A 1-phosphatase (244 aa).

The next 6 membrane-spanning stretches (helical) occupy residues 28-48 (LFVT…PIGA), 60-80 (ELLT…LLFF), 98-118 (ALYV…SGLL), 154-174 (FPSG…LLFP), 178-198 (VAFI…GAHY), and 201-221 (DVIA…IVFA).

It belongs to the lipid A LpxE 1-phosphatase family.

It is found in the cell inner membrane. The protein operates within bacterial outer membrane biogenesis; LPS lipid A biosynthesis. In terms of biological role, removes the 1-phosphate group from (tetraacyl) lipid A species, has no requirement for the Kdo(2) moiety of lipid A. Has no 4'-phosphatase activity. Reduces sensitivity of S.meliloti strain 1021 to the cationic antimicrobial peptide (CAMP) polymyxin B. The polypeptide is Lipid A 1-phosphatase (Rhizobium johnstonii (strain DSM 114642 / LMG 32736 / 3841) (Rhizobium leguminosarum bv. viciae)).